Here is a 199-residue protein sequence, read N- to C-terminus: 7-methyl-GTP pyrophosphatase (199 aa).

Asp74 serves as the catalytic Proton acceptor.

The protein belongs to the Maf family. YceF subfamily. The cofactor is a divalent metal cation.

It is found in the cytoplasm. It carries out the reaction N(7)-methyl-GTP + H2O = N(7)-methyl-GMP + diphosphate + H(+). Nucleoside triphosphate pyrophosphatase that hydrolyzes 7-methyl-GTP (m(7)GTP). May have a dual role in cell division arrest and in preventing the incorporation of modified nucleotides into cellular nucleic acids. The protein is 7-methyl-GTP pyrophosphatase of Albidiferax ferrireducens (strain ATCC BAA-621 / DSM 15236 / T118) (Rhodoferax ferrireducens).